Consider the following 141-residue polypeptide: Molybdopterin synthase catalytic subunit 2 (141 aa).

Residues 37 to 39 (MIR), 103 to 104 (HR), lysine 119, and 126 to 128 (KHQ) contribute to the substrate site.

It belongs to the MoaE family. In terms of assembly, heterotetramer of 2 MoaD subunits and 2 MoaE subunits. Also stable as homodimer. The enzyme changes between these two forms during catalysis.

The enzyme catalyses 2 [molybdopterin-synthase sulfur-carrier protein]-C-terminal-Gly-aminoethanethioate + cyclic pyranopterin phosphate + H2O = molybdopterin + 2 [molybdopterin-synthase sulfur-carrier protein]-C-terminal Gly-Gly + 2 H(+). Its pathway is cofactor biosynthesis; molybdopterin biosynthesis. Its function is as follows. Converts molybdopterin precursor Z into molybdopterin. This requires the incorporation of two sulfur atoms into precursor Z to generate a dithiolene group. The sulfur is provided by MoaD. The polypeptide is Molybdopterin synthase catalytic subunit 2 (moaE2) (Mycobacterium tuberculosis (strain CDC 1551 / Oshkosh)).